An 877-amino-acid polypeptide reads, in one-letter code: Alpha-glucosidase (877 aa).

The N-terminal stretch at Met-1 to Ser-23 is a signal peptide. The tract at residues Val-89–Gln-115 is disordered. Residues Asn-191, Asn-298, Asn-338, and Asn-391 are each glycosylated (N-linked (GlcNAc...) asparagine). Catalysis depends on residues Asp-437 and Glu-440. N-linked (GlcNAc...) asparagine glycosylation occurs at Asn-471. Residue Asp-534 is the Proton donor of the active site. Residue Asn-570 is glycosylated (N-linked (GlcNAc...) asparagine).

It belongs to the glycosyl hydrolase 31 family. High levels seen in the aleurone and scutellum after germination, while low levels are found in developing seeds.

The catalysed reaction is Hydrolysis of terminal, non-reducing (1-&gt;4)-linked alpha-D-glucose residues with release of alpha-D-glucose.. The protein is Alpha-glucosidase of Hordeum vulgare (Barley).